The chain runs to 1155 residues: DNA-directed RNA polymerase subunit beta (1155 aa).

This sequence belongs to the RNA polymerase beta chain family. In terms of assembly, the RNAP catalytic core consists of 2 alpha, 1 beta, 1 beta' and 1 omega subunit. When a sigma factor is associated with the core the holoenzyme is formed, which can initiate transcription.

The catalysed reaction is RNA(n) + a ribonucleoside 5'-triphosphate = RNA(n+1) + diphosphate. In terms of biological role, DNA-dependent RNA polymerase catalyzes the transcription of DNA into RNA using the four ribonucleoside triphosphates as substrates. The sequence is that of DNA-directed RNA polymerase subunit beta from Borrelia hermsii (strain HS1 / DAH).